We begin with the raw amino-acid sequence, 181 residues long: Peptide deformylase (181 aa).

Fe cation is bound by residues cysteine 103 and histidine 145. The active site involves glutamate 146. Residue histidine 149 coordinates Fe cation.

This sequence belongs to the polypeptide deformylase family. Requires Fe(2+) as cofactor.

The enzyme catalyses N-terminal N-formyl-L-methionyl-[peptide] + H2O = N-terminal L-methionyl-[peptide] + formate. In terms of biological role, removes the formyl group from the N-terminal Met of newly synthesized proteins. Requires at least a dipeptide for an efficient rate of reaction. N-terminal L-methionine is a prerequisite for activity but the enzyme has broad specificity at other positions. The polypeptide is Peptide deformylase (Orientia tsutsugamushi (strain Boryong) (Rickettsia tsutsugamushi)).